We begin with the raw amino-acid sequence, 144 residues long: Large ribosomal subunit protein uL11 (144 aa).

It belongs to the universal ribosomal protein uL11 family. Part of the ribosomal stalk of the 50S ribosomal subunit. Interacts with L10 and the large rRNA to form the base of the stalk. L10 forms an elongated spine to which L12 dimers bind in a sequential fashion forming a multimeric L10(L12)X complex. Post-translationally, one or more lysine residues are methylated.

In terms of biological role, forms part of the ribosomal stalk which helps the ribosome interact with GTP-bound translation factors. The chain is Large ribosomal subunit protein uL11 from Polaromonas sp. (strain JS666 / ATCC BAA-500).